A 1749-amino-acid chain; its full sequence is Transposon Ty1-NL2 Gag-Pol polyprotein (1749 aa).

Polar residues-rich tracts occupy residues 1-23, 48-60, 71-97, and 129-152; these read MESQ…SVTS, TKAN…TPAS, SPQT…NQAN, and QFPQ…GNTF. Disordered stretches follow at residues 1–97, 129–171, and 352–421; these read MESQ…NQAN, QFPQ…YVRP, and GSRN…SKST. Residues 153–165 are compositionally biased toward low complexity; sequence TDSSSADSDMTST. The segment at 299–401 is RNA-binding; sequence NNGIHINNKV…NSKSKTARAH (103 aa). Residues 402 to 418 are compositionally biased toward low complexity; sequence NVSTSNNSPSTDNDSIS. Residue Asp461 is the For protease activity; shared with dimeric partner of the active site. Positions 583-640 are integrase-type zinc finger-like; that stretch reads NVHTSESTRKYPYPFIHRMLAHANAQTIRYSLKNNTITYFNESDVDWSSAIDYQCPDC. The Integrase catalytic domain occupies 660–835; it reads NSYEPFQYLH…AGLDISTLLP (176 aa). Mg(2+)-binding residues include Asp671 and Asp736. The segment at 945 to 1166 is disordered; it reads PRNVLSKAVS…LGGIGDSNAY (222 aa). Positions 954-963 are enriched in low complexity; the sequence is SPTDSTPPST. A compositionally biased stretch (polar residues) spans 999 to 1009; that stretch reads STPQISDIEST. Positions 1032 to 1047 are enriched in basic and acidic residues; that stretch reads ESSHTSKSKDFRHSDS. Composition is skewed to polar residues over residues 1048–1076 and 1089–1100; these read YSDN…QTSE and SIDTSSSESNSL. The Bipartite nuclear localization signal motif lies at 1172–1206; sequence KKRSLEDNETEIKVSRDTWNTKNMRSLEPPRSKKR. The 139-residue stretch at 1332–1470 folds into the Reverse transcriptase Ty1/copia-type domain; sequence NNYYITQLDI…DILGLEIKYQ (139 aa). 6 residues coordinate Mg(2+): Asp1340, Asp1421, Asp1422, Asp1604, Glu1646, and Asp1679. The RNase H Ty1/copia-type domain occupies 1604-1746; that stretch reads DASYGNQPYY…IKTFKLLTNK (143 aa).

The capsid protein forms a homotrimer, from which the VLPs are assembled. The protease is a homodimer, whose active site consists of two apposed aspartic acid residues. Post-translationally, initially, virus-like particles (VLPs) are composed of the structural unprocessed proteins Gag and Gag-Pol, and also contain the host initiator methionine tRNA (tRNA(i)-Met) which serves as a primer for minus-strand DNA synthesis, and a dimer of genomic Ty RNA. Processing of the polyproteins occurs within the particle and proceeds by an ordered pathway, called maturation. First, the protease (PR) is released by autocatalytic cleavage of the Gag-Pol polyprotein yielding capsid protein p45 and a Pol-p154 precursor protein. This cleavage is a prerequisite for subsequent processing of Pol-p154 at the remaining sites to release the mature structural and catalytic proteins. Maturation takes place prior to the RT reaction and is required to produce transposition-competent VLPs.

Its subcellular location is the cytoplasm. It localises to the nucleus. It catalyses the reaction DNA(n) + a 2'-deoxyribonucleoside 5'-triphosphate = DNA(n+1) + diphosphate. It carries out the reaction Endonucleolytic cleavage to 5'-phosphomonoester.. In terms of biological role, capsid protein (CA) is the structural component of the virus-like particle (VLP), forming the shell that encapsulates the retrotransposons dimeric RNA genome. The particles are assembled from trimer-clustered units and there are holes in the capsid shells that allow for the diffusion of macromolecules. CA also has nucleocapsid-like chaperone activity, promoting primer tRNA(i)-Met annealing to the multipartite primer-binding site (PBS), dimerization of Ty1 RNA and initiation of reverse transcription. Its function is as follows. The aspartyl protease (PR) mediates the proteolytic cleavages of the Gag and Gag-Pol polyproteins after assembly of the VLP. Functionally, reverse transcriptase/ribonuclease H (RT) is a multifunctional enzyme that catalyzes the conversion of the retro-elements RNA genome into dsDNA within the VLP. The enzyme displays a DNA polymerase activity that can copy either DNA or RNA templates, and a ribonuclease H (RNase H) activity that cleaves the RNA strand of RNA-DNA heteroduplexes during plus-strand synthesis and hydrolyzes RNA primers. The conversion leads to a linear dsDNA copy of the retrotransposon that includes long terminal repeats (LTRs) at both ends. Integrase (IN) targets the VLP to the nucleus, where a subparticle preintegration complex (PIC) containing at least integrase and the newly synthesized dsDNA copy of the retrotransposon must transit the nuclear membrane. Once in the nucleus, integrase performs the integration of the dsDNA into the host genome. In Saccharomyces cerevisiae (strain ATCC 204508 / S288c) (Baker's yeast), this protein is Transposon Ty1-NL2 Gag-Pol polyprotein (TY1B-NL2).